Consider the following 950-residue polypeptide: Translation initiation factor IF-2 (950 aa).

Composition is skewed to basic and acidic residues over residues 128–156 (KPKV…KVEA), 165–186 (AEVK…EKKK), 200–234 (KRAE…DNRR), and 291–312 (NRRD…DGNR). Residues 128-352 (KPKVAEPVKK…YQNNQSSNVP (225 aa)) form a disordered region. Composition is skewed to polar residues over residues 322–336 (NRNQ…NWNQ) and 343–352 (YQNNQSSNVP). One can recognise a tr-type G domain in the interval 448–619 (ERPAVVTIMG…LLVAEVQELK (172 aa)). The tract at residues 457 to 464 (GHVDHGKT) is G1. Residue 457–464 (GHVDHGKT) participates in GTP binding. A G2 region spans residues 482 to 486 (GITQH). Residues 503–506 (DTPG) are G3. GTP contacts are provided by residues 503-507 (DTPGH) and 557-560 (NKLD). The G4 stretch occupies residues 557–560 (NKLD). Positions 595–597 (SAK) are G5.

This sequence belongs to the TRAFAC class translation factor GTPase superfamily. Classic translation factor GTPase family. IF-2 subfamily.

It localises to the cytoplasm. One of the essential components for the initiation of protein synthesis. Protects formylmethionyl-tRNA from spontaneous hydrolysis and promotes its binding to the 30S ribosomal subunits. Also involved in the hydrolysis of GTP during the formation of the 70S ribosomal complex. This chain is Translation initiation factor IF-2 (infB), found in Lactococcus lactis subsp. cremoris (Streptococcus cremoris).